We begin with the raw amino-acid sequence, 143 residues long: Small ribosomal subunit protein eS12 (143 aa).

Belongs to the eukaryotic ribosomal protein eS12 family. Component of the small ribosomal subunit. Mature ribosomes consist of a small (40S) and a large (60S) subunit. The 40S subunit contains about 32 different proteins and 1 molecule of RNA (18S). The 60S subunit contains 45 different proteins and 3 molecules of RNA (25S, 5.8S and 5S).

The protein localises to the cytoplasm. In terms of biological role, component of the ribosome, a large ribonucleoprotein complex responsible for the synthesis of proteins in the cell. The small ribosomal subunit (SSU) binds messenger RNAs (mRNAs) and translates the encoded message by selecting cognate aminoacyl-transfer RNA (tRNA) molecules. The large subunit (LSU) contains the ribosomal catalytic site termed the peptidyl transferase center (PTC), which catalyzes the formation of peptide bonds, thereby polymerizing the amino acids delivered by tRNAs into a polypeptide chain. The nascent polypeptides leave the ribosome through a tunnel in the LSU and interact with protein factors that function in enzymatic processing, targeting, and the membrane insertion of nascent chains at the exit of the ribosomal tunnel. The polypeptide is Small ribosomal subunit protein eS12 (RPS12) (Candida albicans (strain SC5314 / ATCC MYA-2876) (Yeast)).